We begin with the raw amino-acid sequence, 164 residues long: UPF0303 protein RHE_CH02903 (164 aa).

It belongs to the UPF0303 family.

This chain is UPF0303 protein RHE_CH02903, found in Rhizobium etli (strain ATCC 51251 / DSM 11541 / JCM 21823 / NBRC 15573 / CFN 42).